The following is a 364-amino-acid chain: MAKLRVGIVFGGKSAEHEVSLQSAKNIVDAIDKTRFDVVLLGIDKAGQWHVNDAENYLQNADDPAHIALRPSAISLAQVPGKHQHQLINAQNGQPLPTVDVIFPIVHGTLGEDGSLQGMLRVANLPFVGSDVLSSAACMDKDVAKRLLRDAGLNIAPFITLTRTNRHAFSFAEVESRLGLPLFVKPANQGSSVGVSKVANEAQYQQAVALAFEFDHKVVVEQGIKGREIECAVLGNDNPQASTCGEIVLNSEFYAYDTKYIDDNGAQVVVPAQIPSEVNDKIRAIAIQAYQTLGCAGMARVDVFLTADNEVVINEINTLPGFTNISMYPKLWQASGLGYTDLISRLIELALERHTANNALKTTM.

Positions 145–348 (KRLLRDAGLN…YTDLISRLIE (204 aa)) constitute an ATP-grasp domain. 175-230 (ESRLGLPLFVKPANQGSSVGVSKVANEAQYQQAVALAFEFDHKVVVEQGIKGREIE) contributes to the ATP binding site. 3 residues coordinate Mg(2+): aspartate 302, glutamate 315, and asparagine 317.

The protein belongs to the D-alanine--D-alanine ligase family. Requires Mg(2+) as cofactor. Mn(2+) is required as a cofactor.

It localises to the cytoplasm. It catalyses the reaction 2 D-alanine + ATP = D-alanyl-D-alanine + ADP + phosphate + H(+). It participates in cell wall biogenesis; peptidoglycan biosynthesis. In terms of biological role, cell wall formation. This is D-alanine--D-alanine ligase A (ddlA) from Salmonella typhi.